A 374-amino-acid polypeptide reads, in one-letter code: Alcohol dehydrogenase 3, mitochondrial (374 aa).

The transit peptide at methionine 1–alanine 26 directs the protein to the mitochondrion. Zn(2+)-binding residues include cysteine 70, histidine 93, cysteine 124, cysteine 127, cysteine 130, cysteine 138, and cysteine 180. Residues glycine 204 to glycine 210, aspartate 228, lysine 233, valine 295 to leucine 297, and arginine 367 contribute to the NAD(+) site.

The protein belongs to the zinc-containing alcohol dehydrogenase family. In terms of assembly, homotetramer. Zn(2+) is required as a cofactor.

Its subcellular location is the mitochondrion matrix. The catalysed reaction is a primary alcohol + NAD(+) = an aldehyde + NADH + H(+). The enzyme catalyses a secondary alcohol + NAD(+) = a ketone + NADH + H(+). This is Alcohol dehydrogenase 3, mitochondrial (ADH3) from Kluyveromyces lactis (strain ATCC 8585 / CBS 2359 / DSM 70799 / NBRC 1267 / NRRL Y-1140 / WM37) (Yeast).